A 502-amino-acid chain; its full sequence is Calnexin homolog (502 aa).

A signal peptide spans 1–19 (MKFSAYLWWLFLNLALVKG). Over 20-481 (TSLLSNVTLA…IDRILEQPLK (462 aa)) the chain is Lumenal. N-linked (GlcNAc...) asparagine glycans are attached at residues asparagine 25 and asparagine 104. An intrachain disulfide couples cysteine 125 to cysteine 161. Positions 131 and 159 each coordinate an alpha-D-glucoside. Positions 248–381 (IPDVSVAKPH…PEIENPLYYE (134 aa)) are p domain (Extended arm). Repeat copies occupy residues 250 to 261 (DVSVAKPHDWDD), 267 to 278 (DPEAVKLSDRDE), 286 to 297 (HPDGTEPPEWNS), 305 to 316 (DPNAQKPSWWKE), and 320 to 330 (GEWIPPMIKNP). 2 4 X approximate repeats regions span residues 250-316 (DVSV…WWKE) and 320-377 (GEWI…IENP). Asparagine 296 carries an N-linked (GlcNAc...) asparagine glycan. Cysteine 332 and cysteine 338 form a disulfide bridge. 3 consecutive repeat copies span residues 339 to 349 (GQQIPGLINNA), 353 to 363 (GPGELNEIINP), and 367 to 377 (GEWHPPEIENP). Residue glutamate 398 participates in an alpha-D-glucoside binding. N-linked (GlcNAc...) asparagine glycosylation is found at asparagine 416 and asparagine 425. A helical membrane pass occupies residues 482–502 (FVLTAAVVLLTTSVLCCVVFT).

Belongs to the calreticulin family. As to quaternary structure, interacts with MPD1.

It is found in the endoplasmic reticulum membrane. Functionally, interacts with newly synthesized monoglucosylated glycoproteins in the endoplasmic reticulum. It may act in assisting protein assembly and/or in the retention within the ER of unassembled protein subunits. It seems to play a major role in the quality control apparatus of the ER by the retention of incorrectly folded proteins. The sequence is that of Calnexin homolog (CNE1) from Saccharomyces cerevisiae (strain ATCC 204508 / S288c) (Baker's yeast).